A 685-amino-acid polypeptide reads, in one-letter code: Delta-like protein 4 (685 aa).

The signal sequence occupies residues 1 to 26 (MAAASRSASGWALLLLVALWQQRAAG). Over 27–529 (SGVFQLQLQE…PVGLPPSFPW (503 aa)) the chain is Extracellular. 2 cysteine pairs are disulfide-bonded: C50–C54 and C61–C74. Residues N108 and N183 are each glycosylated (N-linked (GlcNAc...) asparagine). The DSL domain occupies 173-217 (VICSDNYYGDNCSRLCKKRNDHFGHYVCQPDGNLSCLPGWTGEYC). C175 and C184 form a disulfide bridge. Interaction with Notch1 regions lie at residues 185–187 (SRL) and 191–195 (RNDHF). Cysteines 188 and 200 form a disulfide. A glycan (N-linked (GlcNAc...) asparagine) is linked at N205. Intrachain disulfides connect C208–C217, C222–C233, C226–C239, C241–C250, C253–C264, C259–C270, C272–C281, C288–C300, C294–C310, C312–C321, C328–C339, C333–C348, C350–C359, C366–C377, C371–C388, C390–C399, C406–C417, C411–C426, C428–C437, C444–C455, C449–C464, C466–C475, C484–C495, C489–C506, and C508–C517. EGF-like domains follow at residues 218 to 251 (QQPICLSGCHEQNGYCSKPAECLCRPGWQGRLCN), 252 to 282 (ECIPHNGCRHGTCSTPWQCTCDEGWGGLFCD), 284 to 322 (DLNYCTHHSPCKNGATCSNSGQRSYTCTCRPGYTGVDCE), 324 to 360 (ELSECDSNPCRNGGSCKDQEDGYHCLCPPGYYGLHCE), 362 to 400 (STLSCADSPCFNGGSCRERNQGANYACECPPNFTGSNCE), 402 to 438 (KVDRCTSNPCANGGQCLNRGPSRMCRCRPGFTGTYCE), 440 to 476 (HVSDCARNPCAHGGTCHDLENGLMCTCPAGFSGRRCE), and 480 to 518 (SIDACASSPCFNRATCYTDLSTDTFVCNCPYGFVGSRCE). A glycan (N-linked (GlcNAc...) asparagine) is linked at N393. Residues 530-550 (VAVSLGVGLAVLLVLLGMVAV) form a helical membrane-spanning segment. Residues 551 to 685 (AVRQLRLRRP…RNECVIATEV (135 aa)) lie on the Cytoplasmic side of the membrane.

As to quaternary structure, interacts with NOTCH4. Interacts (via N-terminal DSL and MNNL domains) with NOTCH1 (via EGF-like domains). As to expression, expressed in vascular endothelium.

It localises to the cell membrane. Involved in the Notch signaling pathway as Notch ligand. Activates NOTCH1 and NOTCH4. Involved in angiogenesis; negatively regulates endothelial cell proliferation and migration and angiogenic sprouting. Essential for retinal progenitor proliferation. Required for suppressing rod fates in late retinal progenitors as well as for proper generation of other retinal cell types. During spinal cord neurogenesis, inhibits V2a interneuron fate. This chain is Delta-like protein 4 (DLL4), found in Homo sapiens (Human).